Consider the following 67-residue polypeptide: Large ribosomal subunit protein bL31 (67 aa).

It belongs to the bacterial ribosomal protein bL31 family. Type A subfamily. In terms of assembly, part of the 50S ribosomal subunit.

Functionally, binds the 23S rRNA. The protein is Large ribosomal subunit protein bL31 of Leptospira borgpetersenii serovar Hardjo-bovis (strain JB197).